The sequence spans 81 residues: MKTLLLTLVVVTIVCLDFGHTMICYNQQSSQPPTTTTCSEGQCYKQRWRDHRGWRTERGCGCPKAIPEVKLNCCKTDRCNG.

The first 21 residues, 1–21 (MKTLLLTLVVVTIVCLDFGHT), serve as a signal peptide directing secretion. 4 cysteine pairs are disulfide-bonded: Cys-24–Cys-43, Cys-38–Cys-60, Cys-62–Cys-73, and Cys-74–Cys-79.

This sequence belongs to the three-finger toxin family. Short-chain subfamily. Type I alpha-neurotoxin sub-subfamily. In terms of tissue distribution, expressed by the venom gland.

Its subcellular location is the secreted. In terms of biological role, binds to muscle nicotinic acetylcholine receptor (nAChR) and inhibit acetylcholine from binding to the receptor, thereby impairing neuromuscular transmission. The chain is Three-finger toxin MALT0057C from Micrurus altirostris (Uruguayan coral snake).